The chain runs to 93 residues: Histone H2B (93 aa).

Positions 1–12 are enriched in low complexity; sequence MPEPAKSAPAPK. The tract at residues 1-31 is disordered; sequence MPEPAKSAPAPKKGSKKAVTKTQKKGDKKRX. N6-acetyllysine occurs at positions 6 and 13. A compositionally biased stretch (basic residues) spans 13 to 28; that stretch reads KGSKKAVTKTQKKGDK. Ser-15 is subject to Phosphoserine. N6-acetyllysine occurs at positions 16 and 21.

Belongs to the histone H2B family. In terms of assembly, the nucleosome is a histone octamer containing two molecules each of H2A, H2B, H3 and H4 assembled in one H3-H4 heterotetramer and two H2A-H2B heterodimers. The octamer wraps approximately 147 bp of DNA. In terms of processing, monoubiquitination at the C-terminal Lys gives a specific tag for epigenetic transcriptional activation and is also prerequisite for histone H3 'Lys-4' and 'Lys-79' methylation. Post-translationally, phosphorylated on Ser-15 during apoptosis; which facilitates apoptotic chromatin condensation.

It is found in the nucleus. The protein localises to the chromosome. Core component of nucleosome. Nucleosomes wrap and compact DNA into chromatin, limiting DNA accessibility to the cellular machineries which require DNA as a template. Histones thereby play a central role in transcription regulation, DNA repair, DNA replication and chromosomal stability. DNA accessibility is regulated via a complex set of post-translational modifications of histones, also called histone code, and nucleosome remodeling. In Crocodylus niloticus (Nile crocodile), this protein is Histone H2B.